The chain runs to 581 residues: Proline--tRNA ligase (581 aa).

This sequence belongs to the class-II aminoacyl-tRNA synthetase family. ProS type 1 subfamily. Homodimer.

Its subcellular location is the cytoplasm. It catalyses the reaction tRNA(Pro) + L-proline + ATP = L-prolyl-tRNA(Pro) + AMP + diphosphate. In terms of biological role, catalyzes the attachment of proline to tRNA(Pro) in a two-step reaction: proline is first activated by ATP to form Pro-AMP and then transferred to the acceptor end of tRNA(Pro). As ProRS can inadvertently accommodate and process non-cognate amino acids such as alanine and cysteine, to avoid such errors it has two additional distinct editing activities against alanine. One activity is designated as 'pretransfer' editing and involves the tRNA(Pro)-independent hydrolysis of activated Ala-AMP. The other activity is designated 'posttransfer' editing and involves deacylation of mischarged Ala-tRNA(Pro). The misacylated Cys-tRNA(Pro) is not edited by ProRS. In Variovorax paradoxus (strain S110), this protein is Proline--tRNA ligase.